A 90-amino-acid polypeptide reads, in one-letter code: Small ribosomal subunit protein uS19 (90 aa).

This sequence belongs to the universal ribosomal protein uS19 family.

In terms of biological role, protein S19 forms a complex with S13 that binds strongly to the 16S ribosomal RNA. This chain is Small ribosomal subunit protein uS19, found in Rhizorhabdus wittichii (strain DSM 6014 / CCUG 31198 / JCM 15750 / NBRC 105917 / EY 4224 / RW1) (Sphingomonas wittichii).